Consider the following 343-residue polypeptide: Anthranilate phosphoribosyltransferase (343 aa).

Residues Gly-84, 87–88 (GD), Thr-92, 94–97 (NIST), 112–120 (KHGNRGVSS), and Ser-124 each bind 5-phospho-alpha-D-ribose 1-diphosphate. Gly-84 is an anthranilate binding site. Ser-96 is a Mg(2+) binding site. Asn-115 contacts anthranilate. Arg-170 is an anthranilate binding site. Mg(2+)-binding residues include Asp-229 and Glu-230.

It belongs to the anthranilate phosphoribosyltransferase family. In terms of assembly, homodimer. The cofactor is Mg(2+).

It catalyses the reaction N-(5-phospho-beta-D-ribosyl)anthranilate + diphosphate = 5-phospho-alpha-D-ribose 1-diphosphate + anthranilate. It functions in the pathway amino-acid biosynthesis; L-tryptophan biosynthesis; L-tryptophan from chorismate: step 2/5. Functionally, catalyzes the transfer of the phosphoribosyl group of 5-phosphorylribose-1-pyrophosphate (PRPP) to anthranilate to yield N-(5'-phosphoribosyl)-anthranilate (PRA). This Burkholderia thailandensis (strain ATCC 700388 / DSM 13276 / CCUG 48851 / CIP 106301 / E264) protein is Anthranilate phosphoribosyltransferase.